The primary structure comprises 65 residues: Muscarinic toxin-like protein 1 (65 aa).

4 disulfides stabilise this stretch: Cys-3/Cys-24, Cys-17/Cys-42, Cys-46/Cys-57, and Cys-58/Cys-63.

Belongs to the three-finger toxin family. Short-chain subfamily. Type C muscarinic toxin sub-subfamily. As to quaternary structure, monomer. Expressed by the venom gland.

Its subcellular location is the secreted. In terms of biological role, binds weakly to the muscarinic acetylcholine receptor (CHRM). The protein is Muscarinic toxin-like protein 1 of Naja kaouthia (Monocled cobra).